The chain runs to 555 residues: Acetyl-coenzyme A thioesterase (555 aa).

A HotDog ACOT-type 1 domain is found at 5–117; sequence APGEVVMSQA…FSTFVAKPVG (113 aa). N6-succinyllysine is present on Lys33. CoA-binding positions include 53–55, 82–84, and Arg144; these read TAS and STS. 2 positions are modified to N6-succinyllysine: Lys159 and Lys228. Positions 179–294 constitute a HotDog ACOT-type 2 domain; that stretch reads RGTSVQSIEL…FLIYNAADDK (116 aa). 234 to 236 contributes to the CoA binding site; it reads KFR. The 210-residue stretch at 340-549 folds into the START domain; the sequence is CIHWDISKQA…IQFLENPPDD (210 aa).

As to quaternary structure, homodimer or homotetramer.

The protein localises to the cytoplasm. It is found in the cytosol. The catalysed reaction is acetyl-CoA + H2O = acetate + CoA + H(+). The enzyme catalyses butanoyl-CoA + H2O = butanoate + CoA + H(+). It carries out the reaction hexanoyl-CoA + H2O = hexanoate + CoA + H(+). It functions in the pathway lipid metabolism; fatty acid metabolism. Its activity is regulated as follows. Inhibited by ADP. Active in the presence of ATP. Cold labile, it dissociates into inactive monomers at low temperature. Catalyzes the hydrolysis of acyl-CoAs into free fatty acids and coenzyme A (CoASH), regulating their respective intracellular levels. Preferentially hydrolyzes acetyl-CoA. This is Acetyl-coenzyme A thioesterase (ACOT12) from Homo sapiens (Human).